Reading from the N-terminus, the 45-residue chain is Large ribosomal subunit protein bL34 (45 aa).

It belongs to the bacterial ribosomal protein bL34 family.

The polypeptide is Large ribosomal subunit protein bL34 (rpmH) (Streptomyces coelicolor (strain ATCC BAA-471 / A3(2) / M145)).